Reading from the N-terminus, the 376-residue chain is Glutamate 5-kinase (376 aa).

Residue lysine 17 coordinates ATP. Residues serine 56, aspartate 144, and asparagine 156 each coordinate substrate. Residues 176-177 and 218-224 each bind ATP; these read TD and TGGMQSK. Positions 283–359 constitute a PUA domain; it reads KGTLLLDAGA…QSREIASVLK (77 aa).

Belongs to the glutamate 5-kinase family.

It localises to the cytoplasm. It catalyses the reaction L-glutamate + ATP = L-glutamyl 5-phosphate + ADP. Its pathway is amino-acid biosynthesis; L-proline biosynthesis; L-glutamate 5-semialdehyde from L-glutamate: step 1/2. Its function is as follows. Catalyzes the transfer of a phosphate group to glutamate to form L-glutamate 5-phosphate. This Desulfotalea psychrophila (strain LSv54 / DSM 12343) protein is Glutamate 5-kinase.